The primary structure comprises 86 residues: Mu-theraphotoxin-Cg2a 2 (86 aa).

Positions 1–21 (MKVSVVITLAVLGVMFVWASA) are cleaved as a signal peptide. A propeptide spanning residues 22–50 (AELEERGSDQRDSPAWIKSMERIFQSEER) is cleaved from the precursor. 3 disulfides stabilise this stretch: cysteine 52–cysteine 66, cysteine 59–cysteine 71, and cysteine 65–cysteine 78. Phenylalanine 84 is modified (phenylalanine amide).

This sequence belongs to the neurotoxin 10 (Hwtx-1) family. 37 (Jztx-31) subfamily. As to expression, expressed by the venom gland.

Its subcellular location is the secreted. Inhibits both peak current and fast inactivation of voltage-gated sodium channels (Nav) channels. Inhibits the inactivation of Nav on DRG neurons (EC(50)=1.77 uM) and peak current of cardiac myocytes (IC(50)=0.90 uM). The sequence is that of Mu-theraphotoxin-Cg2a 2 from Chilobrachys guangxiensis (Chinese earth tiger tarantula).